The following is a 124-amino-acid chain: Small ribosomal subunit protein uS12 (124 aa).

Aspartate 89 carries the 3-methylthioaspartic acid modification.

It belongs to the universal ribosomal protein uS12 family. Part of the 30S ribosomal subunit. Contacts proteins S8 and S17. May interact with IF1 in the 30S initiation complex.

With S4 and S5 plays an important role in translational accuracy. In terms of biological role, interacts with and stabilizes bases of the 16S rRNA that are involved in tRNA selection in the A site and with the mRNA backbone. Located at the interface of the 30S and 50S subunits, it traverses the body of the 30S subunit contacting proteins on the other side and probably holding the rRNA structure together. The combined cluster of proteins S8, S12 and S17 appears to hold together the shoulder and platform of the 30S subunit. The protein is Small ribosomal subunit protein uS12 of Glaesserella parasuis serovar 5 (strain SH0165) (Haemophilus parasuis).